A 67-amino-acid chain; its full sequence is Conotoxin Cl14c (67 aa).

The first 20 residues, 1-20 (MNVTVMFLVLLLLTMPLTDG), serve as a signal peptide directing secretion. The propeptide occupies 21–48 (FNIRATNGGELFGPVQRDAGNVLDHGFQ).

The protein belongs to the conotoxin L superfamily. In terms of processing, contains 2 disulfide bonds. As to expression, expressed by the venom duct.

Its subcellular location is the secreted. In Californiconus californicus (California cone), this protein is Conotoxin Cl14c.